The following is a 409-amino-acid chain: Phosphatidylserine decarboxylase proenzyme, mitochondrial (409 aa).

The transit peptide at 1–52 directs the protein to the mitochondrion; that stretch reads MAASVCRPYVRSLPGVMPWRSSSCHYEYTAMHHFLGSFQKLPFEPFNTGARK. Topologically, residues 53 to 63 are mitochondrial matrix; the sequence is IHTAPVRSLFL. The chain crosses the membrane as a helical span at residues 64-82; sequence LRPVPILLATGGGYAGYRQ. Residues 83–409 lie on the Mitochondrial intermembrane side of the membrane; sequence YEKYRDQKLE…IRFGEALGSL (327 aa). Catalysis depends on charge relay system; for autoendoproteolytic cleavage activity residues Asp-191, His-267, and Ser-378. Ser-378 (schiff-base intermediate with substrate; via pyruvic acid; for decarboxylase activity) is an active-site residue. Ser-378 carries the post-translational modification Pyruvic acid (Ser); by autocatalysis.

It belongs to the phosphatidylserine decarboxylase family. PSD-B subfamily. Eukaryotic type I sub-subfamily. As to quaternary structure, heterodimer of a large membrane-associated beta subunit and a small pyruvoyl-containing alpha subunit. Requires pyruvate as cofactor. Is synthesized initially as an inactive proenzyme. Formation of the active enzyme involves a self-maturation process in which the active site pyruvoyl group is generated from an internal serine residue via an autocatalytic post-translational modification. Two non-identical subunits are generated from the proenzyme in this reaction, and the pyruvate is formed at the N-terminus of the alpha chain, which is derived from the carboxyl end of the proenzyme. The autoendoproteolytic cleavage occurs by a canonical serine protease mechanism, in which the side chain hydroxyl group of the serine supplies its oxygen atom to form the C-terminus of the beta chain, while the remainder of the serine residue undergoes an oxidative deamination to produce ammonia and the pyruvoyl prosthetic group on the alpha chain. During this reaction, the Ser that is part of the protease active site of the proenzyme becomes the pyruvoyl prosthetic group, which constitutes an essential element of the active site of the mature decarboxylase.

It localises to the mitochondrion inner membrane. The protein localises to the cytoplasm. Its subcellular location is the lipid droplet. The enzyme catalyses a 1,2-diacyl-sn-glycero-3-phospho-L-serine + H(+) = a 1,2-diacyl-sn-glycero-3-phosphoethanolamine + CO2. It functions in the pathway phospholipid metabolism; phosphatidylethanolamine biosynthesis. Functionally, catalyzes the formation of phosphatidylethanolamine (PtdEtn) from phosphatidylserine (PtdSer). Plays a central role in phospholipid metabolism and in the interorganelle trafficking of phosphatidylserine. May be involved in lipid droplet biogenesis at the endoplasmic reticulum membrane. The polypeptide is Phosphatidylserine decarboxylase proenzyme, mitochondrial (Cricetulus griseus (Chinese hamster)).